The chain runs to 168 residues: MNSSTEGRPTPNLPRTANKRGVARLAAVQALYQMDVAGTGVLEVVAEYEAFRLGKEVDGTQYLDADPQWFRAIVAGVVDEQLKLDPMIHQALTEDWPLSRLDSTLRAILRAGAWELQTRKDVPTAVIVSEYVDIAKAFYTEDEPKLVNAVLDRLAFVIRGESRGVKPR.

Belongs to the NusB family.

Involved in transcription antitermination. Required for transcription of ribosomal RNA (rRNA) genes. Binds specifically to the boxA antiterminator sequence of the ribosomal RNA (rrn) operons. The sequence is that of Transcription antitermination protein NusB from Brucella anthropi (strain ATCC 49188 / DSM 6882 / CCUG 24695 / JCM 21032 / LMG 3331 / NBRC 15819 / NCTC 12168 / Alc 37) (Ochrobactrum anthropi).